A 396-amino-acid polypeptide reads, in one-letter code: Acetate kinase (396 aa).

Asparagine 8 lines the Mg(2+) pocket. Lysine 15 contributes to the ATP binding site. Arginine 89 is a binding site for substrate. The active-site Proton donor/acceptor is the aspartate 146. Residues 206–210 (HLGNG), 281–283 (DLR), and 329–333 (GIGEN) each bind ATP. Glutamate 382 contributes to the Mg(2+) binding site.

The protein belongs to the acetokinase family. In terms of assembly, homodimer. Requires Mg(2+) as cofactor. It depends on Mn(2+) as a cofactor.

The protein resides in the cytoplasm. It carries out the reaction acetate + ATP = acetyl phosphate + ADP. It functions in the pathway metabolic intermediate biosynthesis; acetyl-CoA biosynthesis; acetyl-CoA from acetate: step 1/2. In terms of biological role, catalyzes the formation of acetyl phosphate from acetate and ATP. Can also catalyze the reverse reaction. The protein is Acetate kinase of Geobacillus kaustophilus (strain HTA426).